The chain runs to 579 residues: Insulin-like growth factor 2 mRNA-binding protein 3 (579 aa).

2 consecutive RRM domains span residues 2 to 75 and 81 to 156; these read NKLY…HSVP and RKLQ…YIPD. The segment at 160–192 is disordered; sequence AQQNPLQQPRGRRGLGQRGSSRQGSPGSVSKQK. Low complexity predominate over residues 177–187; it reads RGSSRQGSPGS. Residue S184 is modified to Phosphoserine. KH domains are found at residues 195 to 260, 276 to 343, and 405 to 470; these read DLPL…CKSI, EIPL…EEEI, and TETV…QGRI. Glycyl lysine isopeptide (Lys-Gly) (interchain with G-Cter in SUMO2) cross-links involve residues K450 and K475. The KH 4 domain maps to 487 to 553; sequence KLEAHIRVPS…YACQVAQRKI (67 aa). The residue at position 528 (T528) is a Phosphothreonine.

It belongs to the RRM IMP/VICKZ family. As to quaternary structure, can form homooligomers and heterooligomers with IGF2BP1 and IGF2BP3 in an RNA-dependent manner. Interacts with IGF2BP1. Interacts with ELAVL1, DHX9, HNRNPU, MATR3 and PABPC1. Expressed in fetal liver, fetal lung, fetal kidney, fetal thymus, fetal placenta, fetal follicles of ovary and gonocytes of testis, growing oocytes, spermatogonia and semen (at protein level). Expressed in cervix adenocarcinoma, in testicular, pancreatic and renal-cell carcinomas (at protein level). Expressed ubiquitously during fetal development at 8 and 14 weeks of gestation. Expressed in ovary, testis, brain, placenta, pancreatic cancer tissues and pancreatic cancer cell lines.

It is found in the nucleus. The protein localises to the cytoplasm. It localises to the P-body. The protein resides in the stress granule. Functionally, RNA-binding factor that may recruit target transcripts to cytoplasmic protein-RNA complexes (mRNPs). This transcript 'caging' into mRNPs allows mRNA transport and transient storage. It also modulates the rate and location at which target transcripts encounter the translational apparatus and shields them from endonuclease attacks or microRNA-mediated degradation. Preferentially binds to N6-methyladenosine (m6A)-containing mRNAs and increases their stability. Binds to the 3'-UTR of CD44 mRNA and stabilizes it, hence promotes cell adhesion and invadopodia formation in cancer cells. Binds to beta-actin/ACTB and MYC transcripts. Increases MYC mRNA stability by binding to the coding region instability determinant (CRD) and binding is enhanced by m6A-modification of the CRD. Binds to the 5'-UTR of the insulin-like growth factor 2 (IGF2) mRNAs. This chain is Insulin-like growth factor 2 mRNA-binding protein 3 (IGF2BP3), found in Homo sapiens (Human).